A 318-amino-acid polypeptide reads, in one-letter code: NADH-ubiquinone oxidoreductase chain 1 (318 aa).

A run of 8 helical transmembrane segments spans residues 2–22 (FLINVLTVTLPILLAVAFLTL), 69–89 (FLFTVAPILALTLALTVWAPL), 102–122 (LLFILAMSSLMVYSILWSGWA), 146–166 (MTTITLSMVLMNGSFTLTAFA), 171–191 (HLWLILPMWPLMMMWFTSTLA), 222–242 (LFFMAEYANIIMMNALTVILF), 253–273 (EISTINFVMKTIILTICFLWV), and 294–314 (LPLTLALCMWHISVLISLACI).

It belongs to the complex I subunit 1 family.

It localises to the mitochondrion inner membrane. It carries out the reaction a ubiquinone + NADH + 5 H(+)(in) = a ubiquinol + NAD(+) + 4 H(+)(out). Functionally, core subunit of the mitochondrial membrane respiratory chain NADH dehydrogenase (Complex I) that is believed to belong to the minimal assembly required for catalysis. Complex I functions in the transfer of electrons from NADH to the respiratory chain. The immediate electron acceptor for the enzyme is believed to be ubiquinone. In Loxodonta africana (African elephant), this protein is NADH-ubiquinone oxidoreductase chain 1 (MT-ND1).